The chain runs to 24 residues: Xenoposin-precursor fragment B1 (24 aa).

As to expression, expressed by the skin glands.

Its subcellular location is the secreted. Functionally, has antibacterial activity. The polypeptide is Xenoposin-precursor fragment B1 (Xenopus borealis (Kenyan clawed frog)).